The chain runs to 144 residues: tRNA-specific adenosine deaminase (144 aa).

One can recognise a CMP/dCMP-type deaminase domain in the interval Met-1 to Val-116. His-48 contacts Zn(2+). Residue Glu-50 is the Proton donor of the active site. Zn(2+)-binding residues include Cys-78 and Cys-81.

It belongs to the cytidine and deoxycytidylate deaminase family. As to quaternary structure, homodimer. Zn(2+) serves as cofactor.

The catalysed reaction is adenosine(34) in tRNA + H2O + H(+) = inosine(34) in tRNA + NH4(+). Functionally, catalyzes the deamination of adenosine to inosine at the wobble position 34 of tRNA(Arg2). This chain is tRNA-specific adenosine deaminase, found in Rickettsia felis (strain ATCC VR-1525 / URRWXCal2) (Rickettsia azadi).